Here is a 122-residue protein sequence, read N- to C-terminus: Small ribosomal subunit protein uS13 (122 aa).

Residues P97–K122 are disordered.

Belongs to the universal ribosomal protein uS13 family. In terms of assembly, part of the 30S ribosomal subunit. Forms a loose heterodimer with protein S19. Forms two bridges to the 50S subunit in the 70S ribosome.

Its function is as follows. Located at the top of the head of the 30S subunit, it contacts several helices of the 16S rRNA. In the 70S ribosome it contacts the 23S rRNA (bridge B1a) and protein L5 of the 50S subunit (bridge B1b), connecting the 2 subunits; these bridges are implicated in subunit movement. Contacts the tRNAs in the A and P-sites. The sequence is that of Small ribosomal subunit protein uS13 from Geobacter sulfurreducens (strain ATCC 51573 / DSM 12127 / PCA).